Consider the following 179-residue polypeptide: MSRLQEKYNKEVIPALMEKFGYKNIMQVPKLEKIVVNMGVGEAKDNSKVLESAIADLQQITGQKPVITRAKKSVANFKIRQNMPIGCKVTLRKDMMFEFADKLMNIALPRVRDFRGVSAKSFDGRGNYALGIKEQIIFPEIEYDKIDKVRGMDIIFVTTAKTDEEARELLRYLGMPFAQ.

This sequence belongs to the universal ribosomal protein uL5 family. In terms of assembly, part of the 50S ribosomal subunit; part of the 5S rRNA/L5/L18/L25 subcomplex. Contacts the 5S rRNA and the P site tRNA. Forms a bridge to the 30S subunit in the 70S ribosome.

Its function is as follows. This is one of the proteins that bind and probably mediate the attachment of the 5S RNA into the large ribosomal subunit, where it forms part of the central protuberance. In the 70S ribosome it contacts protein S13 of the 30S subunit (bridge B1b), connecting the 2 subunits; this bridge is implicated in subunit movement. Contacts the P site tRNA; the 5S rRNA and some of its associated proteins might help stabilize positioning of ribosome-bound tRNAs. The protein is Large ribosomal subunit protein uL5 of Clostridium novyi (strain NT).